A 175-amino-acid chain; its full sequence is Tumor necrosis factor receptor superfamily member 13C (175 aa).

Over 1–71 (MGARRLRVRS…EGSALRPDVA (71 aa)) the chain is Extracellular. A TNFR-Cys; truncated repeat occupies 21-38 (QCNQTECFDPLVRNCVSC). 2 cysteine pairs are disulfide-bonded: cysteine 22–cysteine 35 and cysteine 27–cysteine 38. Residue asparagine 23 is glycosylated (N-linked (GlcNAc...) asparagine). An essential for TNFSF13B/TALL1/BAFF/BLyS binding region spans residues 29–34 (DPLVRN). Residues 72–92 (LLVGAPALLGLILALTLVGLV) traverse the membrane as a helical; Signal-anchor for type III membrane protein segment. The Cytoplasmic segment spans residues 93–175 (SLVSWRWRQQ…VTTKTAGPEQ (83 aa)). A disordered region spans residues 124–175 (VPSSETPHASAPTWPPLKEDADSALPRHSVPVPATELGSTELVTTKTAGPEQ). Positions 160 to 175 (LGSTELVTTKTAGPEQ) are enriched in polar residues.

In terms of tissue distribution, highly expressed in spleen and testis; detected at lower levels in lung and thymus.

The protein localises to the membrane. In terms of biological role, B-cell receptor specific for TNFSF13B/TALL1/BAFF/BLyS. Promotes the survival of mature B-cells and the B-cell response. The chain is Tumor necrosis factor receptor superfamily member 13C (Tnfrsf13c) from Mus musculus (Mouse).